A 142-amino-acid polypeptide reads, in one-letter code: Large ribosomal subunit protein uL16 (142 aa).

It belongs to the universal ribosomal protein uL16 family. In terms of assembly, part of the 50S ribosomal subunit.

Functionally, binds 23S rRNA and is also seen to make contacts with the A and possibly P site tRNAs. The polypeptide is Large ribosomal subunit protein uL16 (Thermosipho melanesiensis (strain DSM 12029 / CIP 104789 / BI429)).